The primary structure comprises 188 residues: Ribosome maturation factor RimM (188 aa).

Residues 93–175 form the PRC barrel domain; that stretch reads QDEFYFTDLI…EIEVQGDLSD (83 aa).

It belongs to the RimM family. Binds ribosomal protein uS19.

It is found in the cytoplasm. Its function is as follows. An accessory protein needed during the final step in the assembly of 30S ribosomal subunit, possibly for assembly of the head region. Essential for efficient processing of 16S rRNA. May be needed both before and after RbfA during the maturation of 16S rRNA. It has affinity for free ribosomal 30S subunits but not for 70S ribosomes. In Gluconacetobacter diazotrophicus (strain ATCC 49037 / DSM 5601 / CCUG 37298 / CIP 103539 / LMG 7603 / PAl5), this protein is Ribosome maturation factor RimM.